The following is a 276-amino-acid chain: Mitochondrial outer membrane protein porin 2 (276 aa).

Ser-76 carries the phosphoserine modification. Thr-236 is modified (phosphothreonine).

This sequence belongs to the eukaryotic mitochondrial porin (TC 1.B.8.1) family. Expressed in root tips, steles, leaves, sepals, petals, stamen and pistils.

It is found in the mitochondrion outer membrane. In terms of biological role, forms a channel through the mitochondrial outer membrane that allows diffusion of small hydrophilic molecules. The channel adopts an open conformation at low or zero membrane potential and a closed conformation at potentials above 30-40 mV. The open state has a weak anion selectivity whereas the closed state is cation-selective. Involved in plant growth and development at the vegetative and reproductive stages. Is important for leaf and pollen development and mitochondrial membrane potential steady state. May be involved in ABA-mediated early seedling development and disease resistance. This Arabidopsis thaliana (Mouse-ear cress) protein is Mitochondrial outer membrane protein porin 2 (VDAC2).